The chain runs to 132 residues: MSTHDPISDLITRIRNAQMRAKSKVSTPGSKMRANVLEVLKSEGYIRGYATLEHASGRSEIEIELKYFDGEPVIREIERVSKPGRRVYASVKNLPRVNNGLGISVLSTPKGIMADHEARDANVGGEVLFTVF.

This sequence belongs to the universal ribosomal protein uS8 family. Part of the 30S ribosomal subunit. Contacts proteins S5 and S12.

One of the primary rRNA binding proteins, it binds directly to 16S rRNA central domain where it helps coordinate assembly of the platform of the 30S subunit. In Rhodopseudomonas palustris (strain BisA53), this protein is Small ribosomal subunit protein uS8.